The sequence spans 584 residues: Arginine--tRNA ligase (584 aa).

Residues 126 to 136 carry the 'HIGH' region motif; the sequence is PNIAKEMHVGH.

This sequence belongs to the class-I aminoacyl-tRNA synthetase family. Monomer.

It localises to the cytoplasm. The enzyme catalyses tRNA(Arg) + L-arginine + ATP = L-arginyl-tRNA(Arg) + AMP + diphosphate. This Nostoc punctiforme (strain ATCC 29133 / PCC 73102) protein is Arginine--tRNA ligase.